The following is a 465-amino-acid chain: MVICLLLCTPTDIFVVASPEVNETQEYVPVNVYHDTDVTRKKIVTAQFECYQKIMKDNDHNKIGPVCNRTWDGWLCWDDTEAGFTSEQYCPDYFQDFDPSELVTKICSDNGHWFLHPESNRTWTNYTRCNEHTNEGRMTAMNLFYLALIGHGLSLTSLLISLGIFFYFKSLSCQRITLHKNLFFSFVLNSVITIIWLTAVANNQELVQRNPTSCKVSQFIHLYLFGCNYFWMLCEGIYLHTLIVVAVFAEKQHLMWYYLLGWGFPLIPASIHAIARSYYYNDNCWISSNTSLLYIIHGPICAALLVNLFFLLNIVRVLITKLKVTHQAESSLYMKAVRATLILVPLLGIQYVLLPYKPEGRVSSEIYDYIMHILMHYQGLLVATIFCFFNGEVQGVLRRHWNQYRIQFGSTFAHSDAMRSASYTASSITEVQGCYSIDSHTEHLNGKGAPLDIETSILKSENPFT.

The N-terminal stretch at 1-17 (MVICLLLCTPTDIFVVA) is a signal peptide. Over 18–141 (SPEVNETQEY…HTNEGRMTAM (124 aa)) the chain is Extracellular. 4 N-linked (GlcNAc...) asparagine glycosylation sites follow: asparagine 22, asparagine 68, asparagine 120, and asparagine 125. Disulfide bonds link cysteine 50-cysteine 76, cysteine 67-cysteine 107, and cysteine 90-cysteine 129. A helical transmembrane segment spans residues 142–166 (NLFYLALIGHGLSLTSLLISLGIFF). Residues 167–177 (YFKSLSCQRIT) lie on the Cytoplasmic side of the membrane. A helical membrane pass occupies residues 178 to 200 (LHKNLFFSFVLNSVITIIWLTAV). The Extracellular portion of the chain corresponds to 201–211 (ANNQELVQRNP). Residues 212-240 (TSCKVSQFIHLYLFGCNYFWMLCEGIYLH) traverse the membrane as a helical segment. Topologically, residues 241–254 (TLIVVAVFAEKQHL) are cytoplasmic. Residues 255–275 (MWYYLLGWGFPLIPASIHAIA) form a helical membrane-spanning segment. The Extracellular segment spans residues 276-291 (RSYYYNDNCWISSNTS). Asparagine 289 is a glycosylation site (N-linked (GlcNAc...) asparagine). The helical transmembrane segment at 292 to 316 (LLYIIHGPICAALLVNLFFLLNIVR) threads the bilayer. The Cytoplasmic segment spans residues 317–331 (VLITKLKVTHQAESS). The chain crosses the membrane as a helical span at residues 332–353 (LYMKAVRATLILVPLLGIQYVL). The Extracellular portion of the chain corresponds to 354–368 (LPYKPEGRVSSEIYD). A helical transmembrane segment spans residues 369-389 (YIMHILMHYQGLLVATIFCFF). The Cytoplasmic segment spans residues 390–465 (NGEVQGVLRR…SILKSENPFT (76 aa)).

This sequence belongs to the G-protein coupled receptor 2 family.

It localises to the cell membrane. In terms of biological role, may function as G protein-coupled receptor for calcitonin-gene-related peptides and adrenomedullin. Specificity may be modulated by accessory proteins. May activate cAMP-dependent pathway. The polypeptide is Calcitonin gene-related peptide type 1 receptor (calcrl) (Oncorhynchus gorbuscha (Pink salmon)).